Here is a 674-residue protein sequence, read N- to C-terminus: ATP-citrate synthase subunit 1 (674 aa).

Positions 1-10 (MPSATSTNGA) are enriched in low complexity. Residues 1 to 26 (MPSATSTNGANGNGNGNGASASPAPG) are disordered. ATP-binding positions include 261–281 (LLRY…EVGG) and 312–338 (FKTE…KNKS). A Mg(2+)-binding site is contributed by Glu278. His320 (tele-phosphohistidine intermediate) is an active-site residue. A CoA-binding site is contributed by 339–349 (MREAGFYVPDT).

It belongs to the succinate/malate CoA ligase alpha subunit family. In terms of assembly, composed of two subunits.

The protein resides in the cytoplasm. It carries out the reaction oxaloacetate + acetyl-CoA + ADP + phosphate = citrate + ATP + CoA. Its function is as follows. Catalyzes the formation of cytosolic acetyl-CoA, which is mainly used for the biosynthesis of fatty acids and sterols. The sequence is that of ATP-citrate synthase subunit 1 (ACL1) from Sordaria macrospora (strain ATCC MYA-333 / DSM 997 / K(L3346) / K-hell).